The following is a 472-amino-acid chain: NADH-quinone oxidoreductase subunit N (472 aa).

A run of 14 helical transmembrane segments spans residues 11–31 (AELS…FLPA), 43–63 (ILLT…LFGG), 67–87 (STPM…LVFL), 103–123 (GEFY…VSAG), 125–145 (FLLF…LVAF), 159–179 (FILS…MIYG), 200–220 (VLAL…VPFH), 234–254 (VSAY…MIIL), 265–285 (WSEI…LFAI), 293–313 (FMAF…LAGT), 318–338 (ASLV…FGVI), 362–384 (PKLT…FAGF), 401–421 (LIVF…LLIV), and 446–466 (LLVC…YQLL).

Belongs to the complex I subunit 2 family. In terms of assembly, NDH-1 is composed of 14 different subunits. Subunits NuoA, H, J, K, L, M, N constitute the membrane sector of the complex.

Its subcellular location is the cell inner membrane. It carries out the reaction a quinone + NADH + 5 H(+)(in) = a quinol + NAD(+) + 4 H(+)(out). Functionally, NDH-1 shuttles electrons from NADH, via FMN and iron-sulfur (Fe-S) centers, to quinones in the respiratory chain. The immediate electron acceptor for the enzyme in this species is believed to be a menaquinone. Couples the redox reaction to proton translocation (for every two electrons transferred, four hydrogen ions are translocated across the cytoplasmic membrane), and thus conserves the redox energy in a proton gradient. This is NADH-quinone oxidoreductase subunit N from Phocaeicola vulgatus (strain ATCC 8482 / DSM 1447 / JCM 5826 / CCUG 4940 / NBRC 14291 / NCTC 11154) (Bacteroides vulgatus).